Reading from the N-terminus, the 505-residue chain is ATP synthase subunit beta (505 aa).

Residues 1-25 form a disordered region; sequence MAKAATPKETAAVKKPAAPKKAATA. Residue 183 to 190 participates in ATP binding; sequence GGAGVGKT.

This sequence belongs to the ATPase alpha/beta chains family. F-type ATPases have 2 components, CF(1) - the catalytic core - and CF(0) - the membrane proton channel. CF(1) has five subunits: alpha(3), beta(3), gamma(1), delta(1), epsilon(1). CF(0) has three main subunits: a(1), b(2) and c(9-12). The alpha and beta chains form an alternating ring which encloses part of the gamma chain. CF(1) is attached to CF(0) by a central stalk formed by the gamma and epsilon chains, while a peripheral stalk is formed by the delta and b chains.

It is found in the cell inner membrane. The enzyme catalyses ATP + H2O + 4 H(+)(in) = ADP + phosphate + 5 H(+)(out). Produces ATP from ADP in the presence of a proton gradient across the membrane. The catalytic sites are hosted primarily by the beta subunits. The polypeptide is ATP synthase subunit beta (Sinorhizobium fredii (strain NBRC 101917 / NGR234)).